The sequence spans 29 residues: Mycofactocin precursor peptide (29 aa).

It belongs to the mycofactocin precursor peptide family. The post-translational modifications that lead to mycofactocin involve oxidative decarboxylation of the C-terminal tyrosine residue catalyzed by MftC, introduction of a tyramine-valine cross-link, removal of the modified C-terminal dipeptide by MftE. The released dipeptide then undergoes oxidative deamination by MftD, glycosylation by MftF and methylation by an unknown enzyme.

Functionally, precursor peptide that leads to mycofactocin (MFT) after extensive post-translational modifications by enzymes encoded by adjacent genes. Mycofactocin acts as a redox cofactor of nicotinamide-dependent oxidoreductases encoded in the same locus. This chain is Mycofactocin precursor peptide, found in Mycobacterium tuberculosis (strain ATCC 25618 / H37Rv).